The primary structure comprises 578 residues: Lysine--tRNA ligase (578 aa).

Mg(2+) contacts are provided by E414 and E421.

This sequence belongs to the class-II aminoacyl-tRNA synthetase family. Homodimer. Mg(2+) is required as a cofactor.

The protein localises to the cytoplasm. It catalyses the reaction tRNA(Lys) + L-lysine + ATP = L-lysyl-tRNA(Lys) + AMP + diphosphate. The protein is Lysine--tRNA ligase of Porphyromonas gingivalis (strain ATCC BAA-308 / W83).